Reading from the N-terminus, the 234-residue chain is Phosphoribosylaminoimidazole-succinocarboxamide synthase (234 aa).

Belongs to the SAICAR synthetase family.

It catalyses the reaction 5-amino-1-(5-phospho-D-ribosyl)imidazole-4-carboxylate + L-aspartate + ATP = (2S)-2-[5-amino-1-(5-phospho-beta-D-ribosyl)imidazole-4-carboxamido]succinate + ADP + phosphate + 2 H(+). The protein operates within purine metabolism; IMP biosynthesis via de novo pathway; 5-amino-1-(5-phospho-D-ribosyl)imidazole-4-carboxamide from 5-amino-1-(5-phospho-D-ribosyl)imidazole-4-carboxylate: step 1/2. The chain is Phosphoribosylaminoimidazole-succinocarboxamide synthase from Staphylococcus epidermidis (strain ATCC 35984 / DSM 28319 / BCRC 17069 / CCUG 31568 / BM 3577 / RP62A).